A 459-amino-acid chain; its full sequence is Putrescine aminotransferase (459 aa).

Residues 150–151 (GT) and Gln274 contribute to the pyridoxal 5'-phosphate site. Position 300 is an N6-(pyridoxal phosphate)lysine (Lys300). Position 332 (Thr332) interacts with pyridoxal 5'-phosphate.

Belongs to the class-III pyridoxal-phosphate-dependent aminotransferase family. Putrescine aminotransferase subfamily. Pyridoxal 5'-phosphate serves as cofactor.

It catalyses the reaction an alkane-alpha,omega-diamine + 2-oxoglutarate = an omega-aminoaldehyde + L-glutamate. It carries out the reaction putrescine + 2-oxoglutarate = 1-pyrroline + L-glutamate + H2O. The enzyme catalyses cadaverine + 2-oxoglutarate = 5-aminopentanal + L-glutamate. It participates in amine and polyamine degradation; putrescine degradation; 4-aminobutanal from putrescine (transaminase route): step 1/1. In terms of biological role, catalyzes the aminotransferase reaction from putrescine to 2-oxoglutarate, leading to glutamate and 4-aminobutanal, which spontaneously cyclizes to form 1-pyrroline. This is the first step in one of two pathways for putrescine degradation, where putrescine is converted into 4-aminobutanoate (gamma-aminobutyrate or GABA) via 4-aminobutanal. Also functions as a cadaverine transaminase in a a L-lysine degradation pathway to succinate that proceeds via cadaverine, glutarate and L-2-hydroxyglutarate. The chain is Putrescine aminotransferase from Escherichia coli (strain SMS-3-5 / SECEC).